The primary structure comprises 79 residues: MPKRILEGVVVSDKGDKTVVVKVERTIVHPLLKKIVRRSKKYHAHDESNAYKAGEVARIVECAPKSKLKTWEVLPKASA.

The protein belongs to the universal ribosomal protein uS17 family. In terms of assembly, part of the 30S ribosomal subunit.

One of the primary rRNA binding proteins, it binds specifically to the 5'-end of 16S ribosomal RNA. The sequence is that of Small ribosomal subunit protein uS17 from Caulobacter sp. (strain K31).